We begin with the raw amino-acid sequence, 729 residues long: Bromo and FHA domain-containing protein DDB_G0267958 (729 aa).

Low complexity predominate over residues 46-79 (LPIPNTSNTNPPMNQSSSPTTTTTTPTTTTTPTT). Positions 46-83 (LPIPNTSNTNPPMNQSSSPTTTTTTPTTTTTPTTAEPA) are disordered. Positions 112–167 (LIIGSDTELADIQVVRPGIYPKHVEIIYDKEKKKFYLNPLIDPKDSDNVRLNFVPF) constitute an FHA domain. Low complexity-rich tracts occupy residues 208–221 (IPSN…NTPI), 229–275 (PPSS…ATKT), and 283–306 (PTKT…AVKK). Disordered stretches follow at residues 208-361 (IPSN…MSCK) and 403-442 (SRRP…PKVP). Over residues 310 to 341 (DDDYGDDYNEEEDDDDEEEEEEEEEEEEEEEV) the composition is skewed to acidic residues. Positions 315 to 352 (DDYNEEEDDDDEEEEEEEEEEEEEEEVESKQIKVVNSK) form a coiled coil. Residues 406–431 (PTAPVTPTKPTSTKKVTTPKKATVVK) are compositionally biased toward low complexity. Residues 498 to 617 (SNEKKEILKC…IELYKALSNS (120 aa)) form the Bromo domain. The stretch at 659 to 718 (SKNKEQTVPQEEDEEEEEEEEEEEEEEEEGEEGKEDEEEEEKEEEEGEENEEEEDVEIDD) forms a coiled coil. Residues 659-729 (SKNKEQTVPQ…EIDQESDDDQ (71 aa)) are disordered. Positions 668-729 (QEEDEEEEEE…EIDQESDDDQ (62 aa)) are enriched in acidic residues.

This chain is Bromo and FHA domain-containing protein DDB_G0267958, found in Dictyostelium discoideum (Social amoeba).